The sequence spans 1063 residues: Unconventional myosin-Ic (1063 aa).

Methionine 1 carries the N-acetylmethionine modification. Residue threonine 10 is modified to Phosphoserine. The region spanning glycine 47–glutamate 731 is the Myosin motor domain. Residues asparagine 88, tyrosine 96, serine 139–glutamate 148, and asparagine 192–serine 196 each bind ATP. Lysine 383 carries the post-translational modification N6-methyllysine. Residue serine 408 is modified to Phosphoserine. An N6-acetyllysine modification is found at lysine 486. Residue serine 536 is modified to Phosphoserine. An actin-binding region spans residues leucine 608–aspartate 630. 2 IQ domains span residues arginine 734–valine 757 and lysine 758–threonine 786. Serine 864 and serine 1041 each carry phosphoserine. In terms of domain architecture, TH1 spans lysine 885–arginine 1059.

Belongs to the TRAFAC class myosin-kinesin ATPase superfamily. Myosin family. In terms of assembly, interacts (via its IQ motifs) with CABP1 and CIB1; the interaction with CABP1 and CIB1 is calcium-dependent. Interacts (via tail domain) with PLEKHB1 (via PH domain); the interaction is not affected by the presence or absence of calcium and CALM. Interacts with POLR1A. Interacts with POLR2A. Component of the B-WICH complex, at least composed of SMARCA5/SNF2H, BAZ1B/WSTF, SF3B1, DEK, MYO1C, ERCC6, MYBBP1A and DDX21. Interacts (via its IQ motifs) with CALM; this precludes interaction with YWHAB. Interacts with YWHAB; this precludes interaction with CALM. Interacts with RPS6. Interacts with actin. Interacts with LLPH. Interacts with GLUT4. Interacts (via its IQ motifs) with SH3BGRL3; the interaction is dependent on calcium and takes place at membrane ruffles. Post-translationally, isoform 2 contains a N-acetylmethionine at position 1. In terms of tissue distribution, isoform 3 is expressed in small intestine, pancreas, brain, kidney, skin, heart muscle, testis, striated muscle, spleen, liver and lung (at protein level). Expressed in brain, testis, adrenal glands, thymus, spleen, kidney, lung, heart, cochlea and vestibule. Expressed in sensory hair cells of the inner ear. Expressed in adipocytes.

The protein resides in the cytoplasm. It is found in the nucleus. It localises to the cell cortex. Its subcellular location is the cell projection. The protein localises to the stereocilium membrane. The protein resides in the cytoplasmic vesicle. It is found in the ruffle membrane. It localises to the nucleolus. Its subcellular location is the nucleoplasm. Functionally, myosins are actin-based motor molecules with ATPase activity. Unconventional myosins serve in intracellular movements. Their highly divergent tails bind to membranous compartments, which then are moved relative to actin filaments. Involved in glucose transporter recycling in response to insulin by regulating movement of intracellular GLUT4-containing vesicles to the plasma membrane. Component of the hair cell's (the sensory cells of the inner ear) adaptation-motor complex. Acts as a mediator of adaptation of mechanoelectrical transduction in stereocilia of vestibular hair cells. Binds phosphoinositides and links the actin cytoskeleton to cellular membranes. In terms of biological role, involved in regulation of transcription. Associated with transcriptional active ribosomal genes. Appears to cooperate with the WICH chromatin-remodeling complex to facilitate transcription. Necessary for the formation of the first phosphodiester bond during transcription initiation. The sequence is that of Unconventional myosin-Ic (Myo1c) from Mus musculus (Mouse).